A 359-amino-acid polypeptide reads, in one-letter code: 3-dehydroquinate synthase (359 aa).

NAD(+)-binding positions include 71–76, 105–109, 129–130, Lys142, and Lys151; these read DGEAYK, GVIGD, and TT. 3 residues coordinate Zn(2+): Glu184, His247, and His264.

The protein belongs to the sugar phosphate cyclases superfamily. Dehydroquinate synthase family. Co(2+) is required as a cofactor. The cofactor is Zn(2+). Requires NAD(+) as cofactor.

The protein resides in the cytoplasm. It catalyses the reaction 7-phospho-2-dehydro-3-deoxy-D-arabino-heptonate = 3-dehydroquinate + phosphate. Its pathway is metabolic intermediate biosynthesis; chorismate biosynthesis; chorismate from D-erythrose 4-phosphate and phosphoenolpyruvate: step 2/7. In terms of biological role, catalyzes the conversion of 3-deoxy-D-arabino-heptulosonate 7-phosphate (DAHP) to dehydroquinate (DHQ). This is 3-dehydroquinate synthase from Burkholderia vietnamiensis (strain G4 / LMG 22486) (Burkholderia cepacia (strain R1808)).